Consider the following 83-residue polypeptide: Sec-independent protein translocase protein TatA (83 aa).

Residues Gly2–Phe22 traverse the membrane as a helical segment. Basic and acidic residues-rich tracts occupy residues Ala50–Ala65 and Ala74–Lys83. Residues Ala50–Lys83 are disordered.

This sequence belongs to the TatA/E family. In terms of assembly, the Tat system comprises two distinct complexes: a TatABC complex, containing multiple copies of TatA, TatB and TatC subunits, and a separate TatA complex, containing only TatA subunits. Substrates initially bind to the TatABC complex, which probably triggers association of the separate TatA complex to form the active translocon.

The protein resides in the cell inner membrane. Its function is as follows. Part of the twin-arginine translocation (Tat) system that transports large folded proteins containing a characteristic twin-arginine motif in their signal peptide across membranes. TatA could form the protein-conducting channel of the Tat system. This Saccharophagus degradans (strain 2-40 / ATCC 43961 / DSM 17024) protein is Sec-independent protein translocase protein TatA.